The chain runs to 210 residues: Regulatory protein RecX (210 aa).

Positions 28 to 47 (SRRQEEGAASSLFDREAEEK) are disordered.

Belongs to the RecX family.

It is found in the cytoplasm. Its function is as follows. Modulates RecA activity. In Corynebacterium efficiens (strain DSM 44549 / YS-314 / AJ 12310 / JCM 11189 / NBRC 100395), this protein is Regulatory protein RecX.